The chain runs to 446 residues: D(1A) dopamine receptor (446 aa).

Over Met1–Arg23 the chain is Extracellular. N-linked (GlcNAc...) asparagine glycosylation occurs at Asn5. A helical membrane pass occupies residues Ile24–Ile49. Residues Arg50–Asn60 are Cytoplasmic-facing. Residues Phe61 to Ala87 form a helical membrane-spanning segment. The Extracellular segment spans residues Gly88–Cys96. A disulfide bridge links Cys96 with Cys186. A helical membrane pass occupies residues Asn97 to Val119. At Asp120–Lys138 the chain is on the cytoplasmic side. Residues Ala139–Trp163 form a helical membrane-spanning segment. The Extracellular portion of the chain corresponds to His164 to Arg192. Residue Asn175 is glycosylated (N-linked (GlcNAc...) asparagine). The chain crosses the membrane as a helical span at residues Thr193 to Tyr218. At Arg219 to Lys272 the chain is on the cytoplasmic side. The chain crosses the membrane as a helical span at residues Thr273–Gly299. Residues Ser300–Thr312 lie on the Extracellular side of the membrane. The helical transmembrane segment at Phe313–Phe337 threads the bilayer. The Cytoplasmic segment spans residues Arg338–Thr446. 2 S-palmitoyl cysteine lipidation sites follow: Cys347 and Cys351.

Belongs to the G-protein coupled receptor 1 family. As to quaternary structure, interacts with DNAJC14 via its C-terminus. Interacts with DRD2. Interacts with DORIP1.

The protein localises to the cell membrane. The protein resides in the endoplasmic reticulum membrane. Its subcellular location is the cell projection. It is found in the cilium membrane. It localises to the dendrite. The protein localises to the dendritic spine. Dopamine receptor whose activity is mediated by G proteins which activate adenylyl cyclase. This Bos taurus (Bovine) protein is D(1A) dopamine receptor (DRD1).